A 500-amino-acid polypeptide reads, in one-letter code: Potassium voltage-gated channel subfamily V member 1 (500 aa).

Topologically, residues 1-210 (MPSSGRALLD…EKPGSSTAAR (210 aa)) are cytoplasmic. The span at 168–181 (KKDTEDQESQHESE) shows a compositional bias: basic and acidic residues. Positions 168–189 (KKDTEDQESQHESEQDFSQGPC) are disordered. The helical transmembrane segment at 211–231 (IFGVISIIFVVVSIINMALMS) threads the bilayer. At 232–238 (AELSWLD) the chain is on the extracellular side. The chain crosses the membrane as a helical span at residues 239–259 (LQLLEILEYVCISWFTGEFVL). Residues 260 to 276 (RFLCVRDRCRFLRKVPN) lie on the Cytoplasmic side of the membrane. A helical transmembrane segment spans residues 277–297 (IIDLLAILPFYITLLVESLSG). Over 298–309 (SQTTQELENVGR) the chain is Extracellular. Residues 310–331 (IVQVLRLLRALRMLKLGRHSTG) form a helical; Voltage-sensor membrane-spanning segment. At 332–345 (LRSLGMTITQCYEE) the chain is on the cytoplasmic side. The chain crosses the membrane as a helical span at residues 346–366 (VGLLLLFLSVGISIFSTVEYF). A Selectivity filter motif is present at residues 392–397 (TVGYGD). Residues 407–427 (IVAFMCILSGILVLALPIAII) form a helical membrane-spanning segment. The Cytoplasmic portion of the chain corresponds to 428-500 (NDRFSACYFT…RSSGGDDFWF (73 aa)).

The protein belongs to the potassium channel family. V (TC 1.A.1.2) subfamily. Kv8.1/KCNV1 sub-subfamily. In terms of assembly, heteromultimer with KCNB1 and KCNB2. Interacts with KCNC4 and KCND1. Detected in brain.

It is found in the cell membrane. In terms of biological role, potassium channel subunit that does not form functional channels by itself. Modulates KCNB1 and KCNB2 channel activity by shifting the threshold for inactivation to more negative values and by slowing the rate of inactivation. Can down-regulate the channel activity of KCNB1, KCNB2, KCNC4 and KCND1, possibly by trapping them in intracellular membranes. This chain is Potassium voltage-gated channel subfamily V member 1 (KCNV1), found in Homo sapiens (Human).